Here is a 260-residue protein sequence, read N- to C-terminus: Thiazole synthase (260 aa).

Lys96 acts as the Schiff-base intermediate with DXP in catalysis. Residues Gly157, 183 to 184 (AG), and 205 to 206 (AS) contribute to the 1-deoxy-D-xylulose 5-phosphate site.

It belongs to the ThiG family. As to quaternary structure, homotetramer. Forms heterodimers with either ThiH or ThiS.

Its subcellular location is the cytoplasm. It catalyses the reaction [ThiS sulfur-carrier protein]-C-terminal-Gly-aminoethanethioate + 2-iminoacetate + 1-deoxy-D-xylulose 5-phosphate = [ThiS sulfur-carrier protein]-C-terminal Gly-Gly + 2-[(2R,5Z)-2-carboxy-4-methylthiazol-5(2H)-ylidene]ethyl phosphate + 2 H2O + H(+). It participates in cofactor biosynthesis; thiamine diphosphate biosynthesis. Catalyzes the rearrangement of 1-deoxy-D-xylulose 5-phosphate (DXP) to produce the thiazole phosphate moiety of thiamine. Sulfur is provided by the thiocarboxylate moiety of the carrier protein ThiS. In vitro, sulfur can be provided by H(2)S. The sequence is that of Thiazole synthase from Corynebacterium glutamicum (strain ATCC 13032 / DSM 20300 / JCM 1318 / BCRC 11384 / CCUG 27702 / LMG 3730 / NBRC 12168 / NCIMB 10025 / NRRL B-2784 / 534).